The primary structure comprises 368 residues: Flavanone 3-dioxygenase (368 aa).

Residues 191-295 enclose the Fe2OG dioxygenase domain; the sequence is CVDMDQKVIV…RMSIATFQNP (105 aa). The Fe cation site is built by His-218, Asp-220, and His-276. Arg-286 lines the 2-oxoglutarate pocket.

This sequence belongs to the iron/ascorbate-dependent oxidoreductase family. Requires Fe(2+) as cofactor. The cofactor is L-ascorbate.

It carries out the reaction a (2S)-flavan-4-one + 2-oxoglutarate + O2 = a (2R,3R)-dihydroflavonol + succinate + CO2. It functions in the pathway secondary metabolite biosynthesis; flavonoid biosynthesis. Its function is as follows. Involved in the conversion of (2S)-naringenin to (+)-(2R/3R)-dihydrokaempferol. The polypeptide is Flavanone 3-dioxygenase (FHT) (Petroselinum crispum (Parsley)).